The primary structure comprises 212 residues: Thymidylate kinase (212 aa).

7 to 14 (GIEGSGKS) is a binding site for ATP.

The protein belongs to the thymidylate kinase family.

The enzyme catalyses dTMP + ATP = dTDP + ADP. Functionally, phosphorylation of dTMP to form dTDP in both de novo and salvage pathways of dTTP synthesis. This Oleidesulfovibrio alaskensis (strain ATCC BAA-1058 / DSM 17464 / G20) (Desulfovibrio alaskensis) protein is Thymidylate kinase.